A 296-amino-acid chain; its full sequence is Cobalamin trafficking protein CblD (296 aa).

Residues methionine 1–glycine 38 constitute a mitochondrion transit peptide. Lysine 203 carries the post-translational modification N6-acetyllysine.

Heterodimer with MMACHC. Forms a multiprotein complex with MMACHC, MTR and MTRR.

Its subcellular location is the cytoplasm. It localises to the mitochondrion. Its function is as follows. Involved in cobalamin metabolism and trafficking. Plays a role in regulating the biosynthesis and the proportion of two coenzymes, methylcob(III)alamin (MeCbl) and 5'-deoxyadenosylcobalamin (AdoCbl). Promotes oxidation of cob(II)alamin bound to MMACHC. The processing of cobalamin in the cytosol occurs in a multiprotein complex composed of at least MMACHC, MMADHC, MTRR (methionine synthase reductase) and MTR (methionine synthase) which may contribute to shuttle safely and efficiently cobalamin towards MTR in order to produce methionine. This chain is Cobalamin trafficking protein CblD (Mmadhc), found in Rattus norvegicus (Rat).